Here is a 984-residue protein sequence, read N- to C-terminus: MKIYPYNELKTRFAEYAKPGEFNITSADTFRIIRLHYDEKQGCLFAFCNTNIKERVLQFYFKVKLNLYSYKQCYDKHIFPSCRNKCISYTTFVAPGVEGNYLNKINVIKYERNKAAPSDNAACLDKFLHNVNRVHMQTPFVEGAYMRFKKTQRCQNNYVGGSTTRMFNLQHFNEDFELVDEMTLTSGIMPVLSCYDIETHSDGHNMSKASVDCIMSIGFVVYKNDEYAKFCFMYHKLPTQIPETYDDDTYVVMFQNEIDMITAFFDMIKITNPDVILDFNGDVFDLPYILGRLNKTKMLLKRYDLPAAAPTTKLFINKLGNKVDTYYFNYYIHIDLYKFFSSDSNQHKVENFQLNTISSYYLGENKIDLPWTEMVKMYNTRRLDVIAKYNVQDCMLPIKLFVKLKMADSVYSQCILHRLCTDDVICNISHLISVACFYAAITNTRINESTGKEEPDPYFFNKNDLSIISGQFKADKAAAGISNLKRKLIPLKNIPKDAINLGPANQTVKYKGGKVLKPRAGIYKNAFSLDFNSLYLTIMIAICACLSNLILCEDGNVYLNHNSRAIVVKLLLKLLSERCKFKKNRDNQSESAFLYDLYDQKQNSVKRTANSIYGYYGIFYKVLANYITRVGRNQLRLAISLIEGLSNDPEILEKFNLGSITFKVVYGDTDSTFVLPTFNYNEISNETDTLKQICTHVETRVNNSFTDGYKMAFENLMKVLILLKKKKYCYLNSENKIVYKGWLVKKDMPVFMRIAFRTAVEQILRHLDMDKCLQSLQTSFYEYYDEFAKSKSLTDYSFSMTYNDNPGKKRKSTDDNEGPSPKRRVITVARHCREILVNKGTDFVPGNGDRIPYLLIDIEGKVTEKAYPLRLFDPVKMRISWIKHMGILCTFMNELLEIFGDEQKDKIAKCFTAIMQKYMQNQLYDRKEPVLVKINQKKCSVKRKRDDDDDNDDDDDDDCDSSDSENDTQCANNTYKFCLYKMKK.

The bipartite nuclear localization signal stretch occupies residues 804–827 (DNPGKKRKSTDDNEGPSPKRRVIT). The segment at 939–948 (CSVKRKRDDD) is monopartite nuclear localization signal. The tract at residues 943–969 (RKRDDDDDNDDDDDDDCDSSDSENDTQ) is disordered. Acidic residues predominate over residues 947 to 966 (DDDDNDDDDDDDCDSSDSEN).

The protein belongs to the DNA polymerase type-B family.

It localises to the host nucleus. The catalysed reaction is DNA(n) + a 2'-deoxyribonucleoside 5'-triphosphate = DNA(n+1) + diphosphate. Its function is as follows. Replicates the viral genome, host DNA polymerases cannot substitute for the viral enzyme in this process. The protein is DNA polymerase (POL) of Autographa californica nuclear polyhedrosis virus (AcMNPV).